The sequence spans 507 residues: Eukaryotic translation initiation factor 4E-binding protein Mextli homolog (507 aa).

The interval 126–163 (RPEGQHDPAPTVGIPPSATSPPTQVTSSVTSPVPSSPQ) is disordered. Positions 140-158 (PPSATSPPTQVTSSVTSPV) are enriched in low complexity. Residues 242 to 307 (QLRHEMIIRN…EDIERAKDMI (66 aa)) form the KH domain. Disordered regions lie at residues 314-360 (NMSP…DEDI) and 395-424 (ARPS…QQEP). Residues 329–348 (QYSGMSSENQSIPSQQNTAN) are compositionally biased toward polar residues. A compositionally biased stretch (acidic residues) spans 349–360 (IDEDDDDDDEDI).

As to quaternary structure, interacts with eukaryotic translation initiation factor ife-3.

The protein resides in the cytoplasm. Its function is as follows. Plays a role in promoting translation. The sequence is that of Eukaryotic translation initiation factor 4E-binding protein Mextli homolog from Caenorhabditis elegans.